We begin with the raw amino-acid sequence, 156 residues long: Ribosomal RNA large subunit methyltransferase H (156 aa).

S-adenosyl-L-methionine-binding positions include L73, G104, and 123–128 (VSSLTL).

The protein belongs to the RNA methyltransferase RlmH family. As to quaternary structure, homodimer.

The protein resides in the cytoplasm. It catalyses the reaction pseudouridine(1915) in 23S rRNA + S-adenosyl-L-methionine = N(3)-methylpseudouridine(1915) in 23S rRNA + S-adenosyl-L-homocysteine + H(+). Specifically methylates the pseudouridine at position 1915 (m3Psi1915) in 23S rRNA. The chain is Ribosomal RNA large subunit methyltransferase H from Paraburkholderia phytofirmans (strain DSM 17436 / LMG 22146 / PsJN) (Burkholderia phytofirmans).